We begin with the raw amino-acid sequence, 253 residues long: Probable U3 small nucleolar RNA-associated protein 11 (253 aa).

The interval 1–21 (MAAAFRKAVKSRQREYRERSQ) is disordered. Glycyl lysine isopeptide (Lys-Gly) (interchain with G-Cter in SUMO2) cross-links involve residues Lys-74, Lys-83, and Lys-86. Thr-90 is modified (phosphothreonine). Glycyl lysine isopeptide (Lys-Gly) (interchain with G-Cter in SUMO2) cross-links involve residues Lys-103, Lys-120, Lys-143, Lys-144, Lys-180, Lys-211, Lys-218, Lys-235, and Lys-236. Ser-241 is modified (phosphoserine). Lys-246 participates in a covalent cross-link: Glycyl lysine isopeptide (Lys-Gly) (interchain with G-Cter in SUMO2).

This sequence belongs to the UTP11 family. Part of the small subunit (SSU) processome, composed of more than 70 proteins and the RNA chaperone small nucleolar RNA (snoRNA) U3.

It localises to the nucleus. It is found in the nucleolus. Its function is as follows. Part of the small subunit (SSU) processome, first precursor of the small eukaryotic ribosomal subunit. During the assembly of the SSU processome in the nucleolus, many ribosome biogenesis factors, an RNA chaperone and ribosomal proteins associate with the nascent pre-rRNA and work in concert to generate RNA folding, modifications, rearrangements and cleavage as well as targeted degradation of pre-ribosomal RNA by the RNA exosome. Involved in nucleolar processing of pre-18S ribosomal RNA. The chain is Probable U3 small nucleolar RNA-associated protein 11 from Rattus norvegicus (Rat).